The primary structure comprises 169 residues: MAEHQVNYTQNNGLPIVLSSVDKLLNWSRSNSLWGVTYGLACCAIEMMATGGSRFDLDRFGSIFRASPRQSDLMIISGTVTKKHAEFVRRLYDQMPEPKWVISMGSCANTGGMFNTYATVQGVDRIIPVDIYLPGCAPRPETLQYAIMVLQQKIRRQKALPHLKPKRLI.

Positions 42, 43, 107, and 136 each coordinate [4Fe-4S] cluster.

It belongs to the complex I 20 kDa subunit family. In terms of assembly, NDH-1 is composed of 14 different subunits. Subunits NuoB, C, D, E, F, and G constitute the peripheral sector of the complex. [4Fe-4S] cluster is required as a cofactor.

The protein localises to the cell inner membrane. The catalysed reaction is a quinone + NADH + 5 H(+)(in) = a quinol + NAD(+) + 4 H(+)(out). Its function is as follows. NDH-1 shuttles electrons from NADH, via FMN and iron-sulfur (Fe-S) centers, to quinones in the respiratory chain. The immediate electron acceptor for the enzyme in this species is believed to be ubiquinone. Couples the redox reaction to proton translocation (for every two electrons transferred, four hydrogen ions are translocated across the cytoplasmic membrane), and thus conserves the redox energy in a proton gradient. The protein is NADH-quinone oxidoreductase subunit B of Helicobacter hepaticus (strain ATCC 51449 / 3B1).